A 155-amino-acid polypeptide reads, in one-letter code: Ribosomal RNA large subunit methyltransferase H (155 aa).

S-adenosyl-L-methionine-binding positions include Leu72, Gly103, and 122–127 (LSDLTL).

It belongs to the RNA methyltransferase RlmH family. Homodimer.

The protein localises to the cytoplasm. The enzyme catalyses pseudouridine(1915) in 23S rRNA + S-adenosyl-L-methionine = N(3)-methylpseudouridine(1915) in 23S rRNA + S-adenosyl-L-homocysteine + H(+). In terms of biological role, specifically methylates the pseudouridine at position 1915 (m3Psi1915) in 23S rRNA. This Variovorax paradoxus (strain S110) protein is Ribosomal RNA large subunit methyltransferase H.